The sequence spans 199 residues: dITP/XTP pyrophosphatase (199 aa).

8–13 provides a ligand contact to substrate; the sequence is SGNAGK. Aspartate 69 serves as the catalytic Proton acceptor. Position 69 (aspartate 69) interacts with Mg(2+). Substrate-binding positions include serine 70, 154 to 157, lysine 177, and 182 to 183; these read FGYN and HR.

This sequence belongs to the HAM1 NTPase family. As to quaternary structure, homodimer. The cofactor is Mg(2+).

The catalysed reaction is XTP + H2O = XMP + diphosphate + H(+). It catalyses the reaction dITP + H2O = dIMP + diphosphate + H(+). It carries out the reaction ITP + H2O = IMP + diphosphate + H(+). Functionally, pyrophosphatase that catalyzes the hydrolysis of nucleoside triphosphates to their monophosphate derivatives, with a high preference for the non-canonical purine nucleotides XTP (xanthosine triphosphate), dITP (deoxyinosine triphosphate) and ITP. Seems to function as a house-cleaning enzyme that removes non-canonical purine nucleotides from the nucleotide pool, thus preventing their incorporation into DNA/RNA and avoiding chromosomal lesions. This is dITP/XTP pyrophosphatase from Xylella fastidiosa (strain Temecula1 / ATCC 700964).